Here is a 357-residue protein sequence, read N- to C-terminus: Protein RecA (357 aa).

Residue G71–T78 coordinates ATP.

Belongs to the RecA family.

The protein resides in the cytoplasm. In terms of biological role, can catalyze the hydrolysis of ATP in the presence of single-stranded DNA, the ATP-dependent uptake of single-stranded DNA by duplex DNA, and the ATP-dependent hybridization of homologous single-stranded DNAs. It interacts with LexA causing its activation and leading to its autocatalytic cleavage. The sequence is that of Protein RecA from Ehrlichia ruminantium (strain Gardel).